The chain runs to 441 residues: tRNA-2-methylthio-N(6)-dimethylallyladenosine synthase (441 aa).

One can recognise an MTTase N-terminal domain in the interval 2 to 117 (KGLYIKSYGC…LPELLVKAHR (116 aa)). Residues C11, C47, C80, C157, C161, and C164 each coordinate [4Fe-4S] cluster. The 232-residue stretch at 143 to 374 (KNQETSAFIS…QKLLREQQLA (232 aa)) folds into the Radical SAM core domain.

The protein belongs to the methylthiotransferase family. MiaB subfamily. In terms of assembly, monomer. [4Fe-4S] cluster serves as cofactor.

The protein resides in the cytoplasm. The enzyme catalyses N(6)-dimethylallyladenosine(37) in tRNA + (sulfur carrier)-SH + AH2 + 2 S-adenosyl-L-methionine = 2-methylsulfanyl-N(6)-dimethylallyladenosine(37) in tRNA + (sulfur carrier)-H + 5'-deoxyadenosine + L-methionine + A + S-adenosyl-L-homocysteine + 2 H(+). In terms of biological role, catalyzes the methylthiolation of N6-(dimethylallyl)adenosine (i(6)A), leading to the formation of 2-methylthio-N6-(dimethylallyl)adenosine (ms(2)i(6)A) at position 37 in tRNAs that read codons beginning with uridine. The polypeptide is tRNA-2-methylthio-N(6)-dimethylallyladenosine synthase (Ehrlichia canis (strain Jake)).